A 425-amino-acid chain; its full sequence is Polyadenylate-binding protein RBP47B' (425 aa).

RRM domains follow at residues 24–102 (RTLW…LNWA), 116–195 (HSIF…AATP), and 237–309 (TTIS…WSKN).

This sequence belongs to the polyadenylate-binding RBP47 family. Interacts with the poly(A) tail of mRNA in nucleus.

The protein resides in the nucleus. It is found in the cytoplasmic granule. Heterogeneous nuclear ribonucleoprotein (hnRNP)-protein binding the poly(A) tail of mRNA and probably involved in some steps of pre-mRNA maturation. The sequence is that of Polyadenylate-binding protein RBP47B' (RBP47B') from Arabidopsis thaliana (Mouse-ear cress).